The following is a 374-amino-acid chain: UDP-N-acetylglucosamine--N-acetylmuramyl-(pentapeptide) pyrophosphoryl-undecaprenol N-acetylglucosamine transferase (374 aa).

UDP-N-acetyl-alpha-D-glucosamine is bound by residues 10–12, Asn-124, Arg-166, Ser-196, and Gln-294; that span reads TGG.

This sequence belongs to the glycosyltransferase 28 family. MurG subfamily.

It localises to the cell membrane. The catalysed reaction is di-trans,octa-cis-undecaprenyl diphospho-N-acetyl-alpha-D-muramoyl-L-alanyl-D-glutamyl-meso-2,6-diaminopimeloyl-D-alanyl-D-alanine + UDP-N-acetyl-alpha-D-glucosamine = di-trans,octa-cis-undecaprenyl diphospho-[N-acetyl-alpha-D-glucosaminyl-(1-&gt;4)]-N-acetyl-alpha-D-muramoyl-L-alanyl-D-glutamyl-meso-2,6-diaminopimeloyl-D-alanyl-D-alanine + UDP + H(+). It functions in the pathway cell wall biogenesis; peptidoglycan biosynthesis. In terms of biological role, cell wall formation. Catalyzes the transfer of a GlcNAc subunit on undecaprenyl-pyrophosphoryl-MurNAc-pentapeptide (lipid intermediate I) to form undecaprenyl-pyrophosphoryl-MurNAc-(pentapeptide)GlcNAc (lipid intermediate II). The sequence is that of UDP-N-acetylglucosamine--N-acetylmuramyl-(pentapeptide) pyrophosphoryl-undecaprenol N-acetylglucosamine transferase from Symbiobacterium thermophilum (strain DSM 24528 / JCM 14929 / IAM 14863 / T).